Reading from the N-terminus, the 33-residue chain is Phospholipase A2 homolog BmarPLA2 (33 aa).

Belongs to the phospholipase A2 family. Group II subfamily. K49 sub-subfamily. Homodimer; non-covalently linked. Expressed by the venom gland.

It localises to the secreted. Functionally, snake phospholipase A2 homolog that lacks enzymatic activity. May display myotoxin activity. In isolated heart decreases cardiac frequency. Also decreases mean arterial pressure. Does not show antimicrobial activity. Does not change renal parameters (such as perfusion pressure, renal vascular resistance, urinary flow, glomerular filtration rate and sodium tubular transport). This Bothrops marajoensis (Marajo lancehead) protein is Phospholipase A2 homolog BmarPLA2.